Here is a 138-residue protein sequence, read N- to C-terminus: DASH complex subunit DAD2 (138 aa).

Residues 1-14 (MSGFSSRPLSTHLR) are compositionally biased toward polar residues. 2 disordered regions span residues 1-25 (MSGF…QGQS) and 116-138 (PTEH…SGRG).

This sequence belongs to the DASH complex DAD2 family. As to quaternary structure, component of the DASH complex consisting of ASK1, DAD1, DAD2, DAD3, DAD4, DAM1, DUO1, HSK3, SPC19 and SPC34, with a stoichiometry of one copy of each subunit per complex. Multiple DASH complexes oligomerize to form a ring that encircles spindle microtubules and organizes the rod-like NDC80 complexes of the outer kinetochore. DASH complex oligomerization strengthens microtubule attachments. On cytoplasmic microtubules, DASH complexes appear to form patches instead of rings.

It localises to the chromosome. Its subcellular location is the centromere. The protein localises to the kinetochore. The protein resides in the cytoplasm. It is found in the cytoskeleton. It localises to the spindle. Its subcellular location is the nucleus. Functionally, component of the DASH complex that connects microtubules with kinetochores and couples microtubule depolymerisation to chromosome movement; it is involved in retrieving kinetochores to the spindle poles before their re-orientation on the spindle in early mitosis and allows microtubule depolymerization to pull chromosomes apart and resist detachment during anaphase. Kinetochores, consisting of a centromere-associated inner segment and a microtubule-contacting outer segment, play a crucial role in chromosome segregation by mediating the physical connection between centromeric DNA and microtubules. Kinetochores also serve as an input point for the spindle assembly checkpoint, which delays anaphase until all chromosomes have bioriented on the mitotic spindle. This Chaetomium thermophilum (strain DSM 1495 / CBS 144.50 / IMI 039719) (Thermochaetoides thermophila) protein is DASH complex subunit DAD2.